The primary structure comprises 235 residues: PRA1 family protein 1 (235 aa).

The span at 1–17 (MESNSNSNETMYGNPNI) shows a compositional bias: polar residues. The tract at residues 1-55 (MESNSNSNETMYGNPNINMGFVDSGNSNIGNNTGSMSPPPQQQQQPQQASSTPAG) is disordered. Positions 24 to 48 (SGNSNIGNNTGSMSPPPQQQQQPQQ) are enriched in low complexity. The next 2 helical transmembrane spans lie at 144 to 164 (SVFF…LLFI) and 187 to 207 (AFLS…LVGA).

The protein belongs to the PRA1 family.

The protein localises to the membrane. May act as a general Rab protein regulator. The protein is PRA1 family protein 1 (prafA) of Dictyostelium discoideum (Social amoeba).